The following is a 346-amino-acid chain: MTIAVAMSGGTDSLFALVLLKEQGQQVCGLHARFIPPTGHDPVPDIRAMCDRLGVDLHVVDLTEAFEEHVVRPFMEDYMVGRTPNPCARCNATMKFGLLADAAAHVGAVHLATGHYARLLRHPRWGTVLQRGVDPAKDQSYFLSLVPHARLEKAVFPLGNWRKEAVRGELARRSIVPPLPSESQEICFVPDDDYRAFLKDRRVRLPGPGPIVTTRGRKIGSHAGLWQYTEGQRKGLGIAWHEPLYVVGKDMENNMLLVGGREALASPGCVAEEVNLLVPYEDWPAEVAVRIRYRQQPLSARVTLRDGRLYARFREPQPPAARGQVLAVYDMEHHVLGGGVILGPLP.

Position 6 to 13 (6 to 13 (AMSGGTDS)) interacts with ATP. The active-site Nucleophile is the Cys90. Residues Cys90 and Cys187 are joined by a disulfide bond. Gly114 is an ATP binding site. The interval 137 to 139 (KDQ) is interaction with tRNA. Catalysis depends on Cys187, which acts as the Cysteine persulfide intermediate. The interval 292–293 (RY) is interaction with tRNA.

This sequence belongs to the MnmA/TRMU family.

It localises to the cytoplasm. It catalyses the reaction S-sulfanyl-L-cysteinyl-[protein] + uridine(34) in tRNA + AH2 + ATP = 2-thiouridine(34) in tRNA + L-cysteinyl-[protein] + A + AMP + diphosphate + H(+). Catalyzes the 2-thiolation of uridine at the wobble position (U34) of tRNA, leading to the formation of s(2)U34. In Nitratidesulfovibrio vulgaris (strain ATCC 29579 / DSM 644 / CCUG 34227 / NCIMB 8303 / VKM B-1760 / Hildenborough) (Desulfovibrio vulgaris), this protein is tRNA-specific 2-thiouridylase MnmA.